A 125-amino-acid chain; its full sequence is Small ribosomal subunit protein uS13 (125 aa).

Residues 91-125 are disordered; that stretch reads HRRSLPVRGQNTQTNARTRKGKRKTVAGKKKAARK. The span at 107 to 125 shows a compositional bias: basic residues; that stretch reads RTRKGKRKTVAGKKKAARK.

It belongs to the universal ribosomal protein uS13 family. Part of the 30S ribosomal subunit. Forms a loose heterodimer with protein S19. Forms two bridges to the 50S subunit in the 70S ribosome.

Functionally, located at the top of the head of the 30S subunit, it contacts several helices of the 16S rRNA. In the 70S ribosome it contacts the 23S rRNA (bridge B1a) and protein L5 of the 50S subunit (bridge B1b), connecting the 2 subunits; these bridges are implicated in subunit movement. Contacts the tRNAs in the A and P-sites. The protein is Small ribosomal subunit protein uS13 of Chlorobium phaeovibrioides (strain DSM 265 / 1930) (Prosthecochloris vibrioformis (strain DSM 265)).